The following is an 89-amino-acid chain: OMEGA-ectatommitoxin(02)-Rm1b (89 aa).

A signal peptide spans 1–30; that stretch reads MKDSYISIVIAYLMVTFILVSSMPIEGEKG. Intrachain disulfides connect C39–C52, C47–C68, and C70–C79. Positions 43–80 constitute an EGF-like domain; it reads YANYCFNGKCVHFVAQDEPGKPCYSCICDKFYIGKRCG.

It belongs to the EGF domain peptide family. In terms of tissue distribution, expressed by the venom gland.

The protein localises to the secreted. In terms of biological role, ant peptide with probable defensive activity which acts as a potent agonist of the mammalian epidermal growth factor receptor (EGFR). Mimics, both structurally and functionally, vertebrate epidermal growth factor (EGF) peptide hormones. In vivo, intraplantar injection in mice causes long-lasting (several days) hypersensitivity of the injected paw to both mechanical and thermal stimuli. Its long-lasting effect is unusual for venom toxins whose effects are usually immediate. One possible explanation is that it would reduce the duration of a nest attack, discourage future attacks, or enhance the actions of subsequent exposure to other pain-inducing venom peptides. This chain is OMEGA-ectatommitoxin(02)-Rm1b, found in Rhytidoponera metallica (Australian green-headed ant).